The chain runs to 589 residues: Delta-like protein 3 (589 aa).

The signal sequence occupies residues 1–32 (MVSLQVSSLPQTLILAFLLPQALPAGVFELQI). Residues 33-494 (HSFGPGPGPG…LRQADSQRFL (462 aa)) are Extracellular-facing. In terms of domain architecture, DSL spans 174–213 (ARCEPPAVGAACARLCRSRSAPSRCGPGLRPCTPFPDECE). EGF-like domains follow at residues 218-251 (SLTVCRAGCSPEHGYCEEPDECHCLEGWTGPLCT), 276-312 (GPGPCDGNPCANGGSCSETPGSFECACPRGFYGPRCE), 314-353 (SGVTCADGPCFNGGLCVGGEDPDSAYVCHCPPAFQGSNCE), 355-391 (RVDRCSLQPCQNGGLCLDLGHALRCRCRAGFAGPRCE), 393-429 (DLDDCAGRACANGGTCVEGGGARRCSCALGFGGRDCR), and 431-467 (RADPCASRPCAHGGRCYAHFSGLVCACAPGYMGVRCE). 18 disulfide bridges follow: Cys-222-Cys-233, Cys-226-Cys-239, Cys-241-Cys-250, Cys-280-Cys-291, Cys-285-Cys-300, Cys-302-Cys-311, Cys-318-Cys-329, Cys-323-Cys-341, Cys-343-Cys-352, Cys-359-Cys-370, Cys-364-Cys-379, Cys-381-Cys-390, Cys-397-Cys-408, Cys-402-Cys-417, Cys-419-Cys-428, Cys-435-Cys-446, Cys-440-Cys-455, and Cys-457-Cys-466. A helical membrane pass occupies residues 495–515 (LPPALGLLAAAALAGAALLLI). Topologically, residues 516 to 589 (HVRRRGPGRD…PAPSIYAREA (74 aa)) are cytoplasmic. A disordered region spans residues 552 to 574 (QDGAGDGPTSSADWNHPEDGDSR).

As to quaternary structure, can bind and activate Notch-1 or another Notch receptor. Ubiquitinated by MIB (MIB1 or MIB2), leading to its endocytosis and subsequent degradation.

It is found in the membrane. Inhibits primary neurogenesis. May be required to divert neurons along a specific differentiation pathway. Plays a role in the formation of somite boundaries during segmentation of the paraxial mesoderm. The chain is Delta-like protein 3 (Dll3) from Rattus norvegicus (Rat).